We begin with the raw amino-acid sequence, 303 residues long: MKMQLMDLKKQGIDIQENIPLSRFTFTKTGGPAQYLAFPKNLDELKILVETVKTNNLPLTVIGNASNLIIRDGGISGLVLILTKMDKIVANQEEATVTADAGARIIDTSEAACEASLSGLEFAAGIPGSVGGAVFMNAGAYGGETEFVIKSVRVLTREGKFKTYTHDEMEFGYRHSLVQETGDIVISATFGLEPGDKWAIKAKMEYFNGLRRAKQPLEYPSCGSVFKRPTGHFVGPMIIKAGLQGKRIGGAEDSKKHAGFIVNVGGATATDYLDLIHLIQKTIKKDFDVDLQTEVRIIGKEKD.

Residues 28-195 (KTGGPAQYLA…ISATFGLEPG (168 aa)) enclose the FAD-binding PCMH-type domain. The active site involves arginine 174. Serine 224 serves as the catalytic Proton donor. Residue glutamate 294 is part of the active site.

Belongs to the MurB family. Requires FAD as cofactor.

It localises to the cytoplasm. It catalyses the reaction UDP-N-acetyl-alpha-D-muramate + NADP(+) = UDP-N-acetyl-3-O-(1-carboxyvinyl)-alpha-D-glucosamine + NADPH + H(+). Its pathway is cell wall biogenesis; peptidoglycan biosynthesis. Cell wall formation. This is UDP-N-acetylenolpyruvoylglucosamine reductase from Lactobacillus gasseri (strain ATCC 33323 / DSM 20243 / BCRC 14619 / CIP 102991 / JCM 1131 / KCTC 3163 / NCIMB 11718 / NCTC 13722 / AM63).